The sequence spans 72 residues: MLIPWQDLSPETLENLIESFVLREGTDYGEHERTLEQKVADVKRQLQCGEAVLVWSELHETVNIMPRSQFRE.

This sequence belongs to the UPF0270 family.

The polypeptide is UPF0270 protein YheU (Escherichia coli (strain ATCC 8739 / DSM 1576 / NBRC 3972 / NCIMB 8545 / WDCM 00012 / Crooks)).